We begin with the raw amino-acid sequence, 162 residues long: Lipoprotein signal peptidase (162 aa).

Transmembrane regions (helical) follow at residues F56–Y76 and S84–D104. Residues D113 and D139 contribute to the active site. Residues W132–F152 form a helical membrane-spanning segment.

Belongs to the peptidase A8 family.

It localises to the cell inner membrane. The catalysed reaction is Release of signal peptides from bacterial membrane prolipoproteins. Hydrolyzes -Xaa-Yaa-Zaa-|-(S,diacylglyceryl)Cys-, in which Xaa is hydrophobic (preferably Leu), and Yaa (Ala or Ser) and Zaa (Gly or Ala) have small, neutral side chains.. It functions in the pathway protein modification; lipoprotein biosynthesis (signal peptide cleavage). Functionally, this protein specifically catalyzes the removal of signal peptides from prolipoproteins. This chain is Lipoprotein signal peptidase, found in Chlorobaculum tepidum (strain ATCC 49652 / DSM 12025 / NBRC 103806 / TLS) (Chlorobium tepidum).